Consider the following 380-residue polypeptide: Glucose-1-phosphate adenylyltransferase (380 aa).

Residues Gly-164, 179 to 180 (EK), and Ser-190 contribute to the alpha-D-glucose 1-phosphate site.

It belongs to the bacterial/plant glucose-1-phosphate adenylyltransferase family. As to quaternary structure, homotetramer.

The enzyme catalyses alpha-D-glucose 1-phosphate + ATP + H(+) = ADP-alpha-D-glucose + diphosphate. The protein operates within glycan biosynthesis; glycogen biosynthesis. Involved in the biosynthesis of ADP-glucose, a building block required for the elongation reactions to produce glycogen. Catalyzes the reaction between ATP and alpha-D-glucose 1-phosphate (G1P) to produce pyrophosphate and ADP-Glc. The chain is Glucose-1-phosphate adenylyltransferase from Lactococcus lactis subsp. cremoris (strain SK11).